A 234-amino-acid polypeptide reads, in one-letter code: Small ribosomal subunit protein uS3 (234 aa).

A KH type-2 domain is found at 39 to 108 (IRKFVKKKLF…TVIVNVVEVK (70 aa)). Positions 212-234 (KGKNEETNNETADNSRGRRREAK) are disordered.

The protein belongs to the universal ribosomal protein uS3 family. In terms of assembly, part of the 30S ribosomal subunit. Forms a tight complex with proteins S10 and S14.

Binds the lower part of the 30S subunit head. Binds mRNA in the 70S ribosome, positioning it for translation. The protein is Small ribosomal subunit protein uS3 of Alkaliphilus metalliredigens (strain QYMF).